The following is an 877-amino-acid chain: DNA polymerase I (877 aa).

One can recognise a 5'-3' exonuclease domain in the interval 180–270; that stretch reads TPAQFIDLKA…EIGLDDTLLK (91 aa). The 161-residue stretch at 308-468 folds into the 3'-5' exonuclease domain; sequence DEIDFEIVTD…AKEKMMAELL (161 aa).

The protein belongs to the DNA polymerase type-A family. In terms of assembly, single-chain monomer with multiple functions.

It carries out the reaction DNA(n) + a 2'-deoxyribonucleoside 5'-triphosphate = DNA(n+1) + diphosphate. In terms of biological role, in addition to polymerase activity, this DNA polymerase exhibits 3'-5' and 5'-3' exonuclease activity. The polypeptide is DNA polymerase I (polA) (Lactococcus lactis subsp. lactis (strain IL1403) (Streptococcus lactis)).